A 521-amino-acid chain; its full sequence is Citrinin biosynthesis cluster MFS transporter ctnC (521 aa).

The tract at residues 1–29 (MKEEIDAPVSTDASGTDLENARDQPSGEK) is disordered. Transmembrane regions (helical) follow at residues 58–78 (SLIT…SSVF), 95–115 (VMTL…LVWG), 124–144 (LKPL…VAVA), 155–175 (FFLG…LADF), 182–202 (AIAI…GPIM), 237–257 (WTAW…FLTL), 313–333 (ILVC…LFFV), and 349–369 (GIAA…CLLV). An N-linked (GlcNAc...) asparagine glycan is attached at asparagine 383. Helical transmembrane passes span 392 to 412 (LPPM…FGWT), 417 to 437 (ISWA…LMIW), 465 to 485 (AVSA…GVDW), and 489 to 509 (LLGF…FYGA).

The protein belongs to the major facilitator superfamily. CAR1 family.

It is found in the membrane. In terms of biological role, MFS transporter; part of the gene cluster that mediates the biosynthesis the mycotoxin citrinin, a hepato-nephrotoxic compound to humans due to inhibition of respiration complex III. The sequence is that of Citrinin biosynthesis cluster MFS transporter ctnC (ctnC) from Monascus purpureus (Red mold).